The chain runs to 185 residues: Ribosome-recycling factor (185 aa).

Belongs to the RRF family.

The protein localises to the cytoplasm. In terms of biological role, responsible for the release of ribosomes from messenger RNA at the termination of protein biosynthesis. May increase the efficiency of translation by recycling ribosomes from one round of translation to another. The sequence is that of Ribosome-recycling factor from Shewanella woodyi (strain ATCC 51908 / MS32).